A 360-amino-acid polypeptide reads, in one-letter code: Ribosomal RNA small subunit methyltransferase C (360 aa).

Belongs to the methyltransferase superfamily. RsmC family. In terms of assembly, monomer.

It localises to the cytoplasm. It carries out the reaction guanosine(1207) in 16S rRNA + S-adenosyl-L-methionine = N(2)-methylguanosine(1207) in 16S rRNA + S-adenosyl-L-homocysteine + H(+). Specifically methylates the guanine in position 1207 of 16S rRNA in the 30S particle. This chain is Ribosomal RNA small subunit methyltransferase C, found in Alteromonas mediterranea (strain DSM 17117 / CIP 110805 / LMG 28347 / Deep ecotype).